We begin with the raw amino-acid sequence, 1109 residues long: MESKACESKNEDLLPSGITSKGGSSSPFFVTSTHGTIIENTSSTGTLTQMPFFPKYEVELDSPRKSTPYPGKEHIERVLEEYSHQVKDLQRRLNESNELHEKQKFYLRQSVIDLQTKLQEMQMERDAMADIRRRESQSQEESRNQLQNTVRELEAAKCLKEDMLKDSSTQIEQLRKMMLSHEGVLQEIRSILVDFEEASGKKICEHDSMSTMHFRSLGSAISKILRELDTEISFLKGRIFPVEDQLETLKSESQNKIELLLQQHQDRIEQLISEHEVEITGLTEKASSARSQANSVQSQLEIIQEQARNQNSMYMRQLSDLESTVSQLRSELRESKRMYEDKIEELEKQLVLANSELTEARTERDQFSQESGNLDDQLQKLLADLHKREKELSLEKEQNKRLWDRDTGNSITIDHLRRELDDRNMEVQRLEALLKAMKSECQGQMERQMAAIQGKNESLEKVSSLTAQLESTKEMLRKVVEELTAKKMNLESSERTVSDLTASLQEKERAIEATNAEITKLRSRVDLKLQELQHLKNEGDHLRNVQTECEALKLQMAEKDKVIEILRQQIENMTQLVGQHGRTAGAMQVEKAQLEKEINDRKLELQEFKILKDKKDAKIRELEARVSDLELEKVKLVNAGSERLRAVKDIRHERDQLLNEVKTSRTELNHLSEDYEVLKRNFRNKSEEMESTTNRLKMQLKSAQSELEQTRNTLKTMEGSDGHAMKVAMGMQKQITAKRGQIDALQSKVQFLEEAVTSANKERHFLKEEKSKLSQELSTVATEKNKMAGELEVLRSQERRLKEKVANMEVALDKFAECQDIIQRQEQESVRLKLQHTLDVKELQGPGYTSNSSVKPRLLQPASVTRSHSNIPSSQSTTSFLSHHSIKTNTPKEDPTRDLKQLLQELRTVINEEPAMALSKTEEDGRTPSLGALEDRVRDCITESSLRAELCHRSNNSLRESTEGSKSSETLSREPVPLHPGDLEDPSSCFTFTSTASPSGKMSASRSFSSSPKKSPVHSLLTSSAEESVNSTPQYRSTKPIHSPTSAKDSQSPSLETTGKTCQKLQNRLESLQTLVEDLQLKNQAMSSMIRNQEKRIQKVKDQEKMLLK.

Basic and acidic residues predominate over residues 1-12; sequence MESKACESKNED. The disordered stretch occupies residues 1 to 31; the sequence is MESKACESKNEDLLPSGITSKGGSSSPFFVT. A compositionally biased stretch (polar residues) spans 17 to 31; that stretch reads GITSKGGSSSPFFVT. 2 coiled-coil regions span residues 71-166 and 242-828; these read GKEH…MLKD and VEDQ…QEQE. Disordered regions lie at residues 843 to 897 and 952 to 1061; these read LQGP…DPTR and HRSN…TGKT. Polar residues-rich tracts occupy residues 862–882, 953–970, and 988–998; these read ASVTRSHSNIPSSQSTTSFLS, RSNNSLRESTEGSKSSET, and SCFTFTSTASP. Low complexity predominate over residues 999 to 1019; the sequence is SGKMSASRSFSSSPKKSPVHS. Polar residues-rich tracts occupy residues 1020–1037 and 1043–1061; these read LLTSSAEESVNSTPQYRS and SPTSAKDSQSPSLETTGKT. A coiled-coil region spans residues 1053 to 1109; it reads PSLETTGKTCQKLQNRLESLQTLVEDLQLKNQAMSSMIRNQEKRIQKVKDQEKMLLK.

The chain is Coiled-coil domain-containing protein 158 (Ccdc158) from Mus musculus (Mouse).